The chain runs to 192 residues: MASRKQGAREGLWSMGVRLLTTLLCITSLILLLKAKQTVRRALGLGYIAQTVKYSDTSGFIYLVYINILVAAYGLIVFVSLIPSALGKSCSGKCSRWTIFVLDQVFAYVLLSAVSAATEVLYLADKGMSKTQWEALCPTYGFFCHMVSASVAIGSVAVVLLAVLSVSSAQSLFHNFYTRALYTTKMRHSSLT.

Over 1 to 11 (MASRKQGAREG) the chain is Cytoplasmic. A helical membrane pass occupies residues 12–32 (LWSMGVRLLTTLLCITSLILL). Residues 33–58 (LKAKQTVRRALGLGYIAQTVKYSDTS) are Extracellular-facing. Residues 59–79 (GFIYLVYINILVAAYGLIVFV) form a helical membrane-spanning segment. Topologically, residues 80–96 (SLIPSALGKSCSGKCSR) are cytoplasmic. A helical transmembrane segment spans residues 97–117 (WTIFVLDQVFAYVLLSAVSAA). Residues 118 to 145 (TEVLYLADKGMSKTQWEALCPTYGFFCH) are Extracellular-facing. The helical transmembrane segment at 146-166 (MVSASVAIGSVAVVLLAVLSV) threads the bilayer. Residues 167 to 192 (SSAQSLFHNFYTRALYTTKMRHSSLT) are Cytoplasmic-facing.

It belongs to the Casparian strip membrane proteins (CASP) family. As to quaternary structure, homodimer and heterodimers.

The protein resides in the cell membrane. The polypeptide is CASP-like protein 2U1 (Adiantum capillus-veneris (Maidenhair fern)).